A 2108-amino-acid chain; its full sequence is MLSATYRDLNTASNLETSKEKQAAQIVIAQISLLFTTLNNDNFESVEREIRHILDRSSVDIYIKVWERLLTLSSRDILQAGKFLLQENLLHRLLLEFAKDLPKKSTDLIELLKERTFNNQEFQKQTGITLSLFIDLFDKSANKDIIESLDRSSQINDFKTIKMNHTNYLRNFFLQTTPETLESNLRDLLHSLEGESLNDLLALLLSEILSPGSQNLQNDPTRSWLTPPMVLDATNRGNVIARSISSLQANQINWNRVFNLMSTKYFLSAPLMPTTASLSCLFAALHDGPVIDEFFSCDWKVIFKLDLAIQLHKWSVQNGCFDLLNAEGTRKVSETIPNTKQSLLYLLSIASLNLELFLQREELSDGPMLAYFQECFFEDFNYAPEYLILALVKEMKRFVLLIENRTVIDEILITLLIQVHNKSPSSFKDVISTITDDSKIVDAAKIIINSDDAPIANFLKSLLDTGRLDTVINKLPFNEAFKILPCARQIGWEGFDTFLKTKVSPSNVDVVLESLEVQTKMTDTNTPFRSLKTFDLFAFHSLIEVLNKCPLDVLQLQRFESLEFSLLIAFPRLINFGFGHDEAILANGDIAGINNDIEKEMQNYLQKMYSGELAIKDVIELLRRLRDSDLPRDQEVFTCITHAVIAESTFFQDYPLDALATTSVLFGSMILFQLLRGFVLDVAFRIIMRFAKEPPESKMFKFAVQAIYAFRIRLAEYPQYCKDLLRDVPALKSQAQVYQSIVEAATLANAPKERSRPVQEMIPLKFFAVDEVSCQINQEGAPKDVVEKVLFVLNNVTLANLNNKVDELKKSLTPNYFSWFSTYLVTQRAKTEPNYHDLYSKVIVAMGSGLLHQFMVNVTLRQLFVLLSTKDEQAIDKKHLKNLASWLGCITLALNKPIKHKNIAFREMLIEAYKENRLEIVVPFVTKILQRASESKIFKPPNPWTVGILKLLIELNEKANWKLSLTFEVEVLLKSFNLTTKSLKPSNFINTPEVIETLSGALGSITLEQQQTEQQRQIILMQQHQQQMLIYQQRQQQQQQRQQQQQHHISANTIADQQAAFGGEGSISHDNPFNNLLGSTIFVTHPDLKRVFQMALAKSVREILLEVVEKSSGIAVVTTTKIILKDFATEVDESKLKTAAIIMVRHLAQSLARATSIEPLKEGIRSTMQSLAPNLMSLSSSPAEELDTAINENIGIALVLIEKASMDKSTQDLADQLMQAIAIRRYHKERRADQPFITQNTNPYSLSLPEPLGLKNTGVTPQQFRVYEEFGKNIPNLDVIPFAGLPAHAPPMTQNVGLTQPQQQQAQMPTQILTSEQIRAQQQQQQLQKSRLNQPSQSAQPPGVNVPNPQGGIAAVQSDLEQNQRVLVHLMDILVSQIKENATKNNLAELGDQNQIKTIIFQILTFIAKSAQKDQLALKVSQAVVNSLFATSESPLCREVLSLLLEKLCSLSLVARKDVVWWLVYALDSRKFNVPVIRSLLEVNLIDATELDNVLVTAMKNKMENSTEFAMKLIQNTVLSDDPILMRMDFIKTLEHLASSEDENVKKFIKEFEDTKIMPVRKGTKTTRTEKLYLVFTEWVKLLQRVENNDVITTVFIKQLVEKGVISDTDNLLTFVKSSLELSVSSFKESDPTDEVFIAIDALGSLIIKLLILQGFKDDTRRDYINAIFSVIVLVFAKDHSQEGTTFNERPYFRLFSNILYEWATIRTHNFVRISDSSTRQELIEFDSVFYNTFSGYLHALQPFAFPGFSFAWVTLLSHRMLLPIMLRLPNKIGWEKLMLLIIDLFKFLDQYTSKHAVSDAVSVVYKGTLRVILGISNDMPSFLIENHYELMNNLPPTYFQLKNVILSAIPKNMTVPNPYDVDLNMEDIPACKELPEVFFDPVIDLHSLKKPVDNYLRIPSNSLLRTILSAIYKDTYDIKKGVGYDFLSVDSKLIRAIVLHVGIEAGIEYKRTSSNAVFNTKSSYYTLLFNLIQNGSIEMKYQIILSIVEQLRYPNIHTYWFSFVLMNMFKSDEWNDQKLEVQEIILRNFLKRIIVNKPHTWGVSVFFTQLINNNDINLLDLPFVQSVPEIKLILQQLVKYSKKYTTSEQDDQSATINRRQTPLQSNA.

Coiled coils occupy residues 795–813 (NVTLANLNNKVDELKKSLT) and 1021–1046 (MQQHQQQMLIYQQRQQQQQQRQQQQQ). Residues 1323-1352 (QQQQLQKSRLNQPSQSAQPPGVNVPNPQGG) form a disordered region. Positions 1329 to 1339 (KSRLNQPSQSA) are enriched in polar residues. Residues 1340–1352 (QPPGVNVPNPQGG) show a composition bias toward low complexity. T2102 is subject to Phosphothreonine.

This sequence belongs to the CNOT1 family. As to quaternary structure, forms a NOT protein complex that comprises NOT1, NOT2, NOT3, NOT4 and NOT5. Subunit of the 1.0 MDa CCR4-NOT core complex that contains CCR4, CAF1, NOT1, NOT2, NOT3, NOT4, NOT5, CAF40 and CAF130. In the complex interacts with CCR4, POP2, NOT2, NOT4 and NOT5. The core complex probably is part of a less characterized 1.9 MDa CCR4-NOT complex.

The protein localises to the cytoplasm. The protein resides in the nucleus. Acts as a component of the CCR4-NOT core complex, which in the nucleus seems to be a general transcription factor, and in the cytoplasm the major mRNA deadenylase involved in mRNA turnover. The NOT protein subcomplex negatively regulates the basal and activated transcription of many genes. Preferentially affects TC-type TATA element-dependent transcription. Could directly or indirectly inhibit component(s) of the general transcription machinery. In Saccharomyces cerevisiae (strain ATCC 204508 / S288c) (Baker's yeast), this protein is General negative regulator of transcription subunit 1 (CDC39).